A 141-amino-acid polypeptide reads, in one-letter code: ATP synthase epsilon chain 1 (141 aa).

This sequence belongs to the ATPase epsilon chain family. In terms of assembly, F-type ATPases have 2 components, CF(1) - the catalytic core - and CF(0) - the membrane proton channel. CF(1) has five subunits: alpha(3), beta(3), gamma(1), delta(1), epsilon(1). CF(0) has three main subunits: a, b and c.

It localises to the cell inner membrane. Produces ATP from ADP in the presence of a proton gradient across the membrane. This Thiobacillus denitrificans (strain ATCC 25259 / T1) protein is ATP synthase epsilon chain 1.